We begin with the raw amino-acid sequence, 298 residues long: Ribosomal protein L11 methyltransferase (298 aa).

S-adenosyl-L-methionine-binding residues include threonine 148, glycine 169, aspartate 191, and asparagine 233.

Belongs to the methyltransferase superfamily. PrmA family.

The protein localises to the cytoplasm. The catalysed reaction is L-lysyl-[protein] + 3 S-adenosyl-L-methionine = N(6),N(6),N(6)-trimethyl-L-lysyl-[protein] + 3 S-adenosyl-L-homocysteine + 3 H(+). Methylates ribosomal protein L11. The chain is Ribosomal protein L11 methyltransferase from Marinobacter nauticus (strain ATCC 700491 / DSM 11845 / VT8) (Marinobacter aquaeolei).